The chain runs to 256 residues: Coiled-coil domain-containing protein 90B, mitochondrial (256 aa).

The transit peptide at 1–42 directs the protein to the mitochondrion; the sequence is MRNRWIWRFLRPECSGIRWISSPHGRLSPALRRGFLTTTTKS. A coiled-coil region spans residues 106–164; that stretch reads AQQEITIQQLMAHLDSIRKDMVILEKSEFANLRAENEKMKIELDQVKQQLINETSRIRA. Residues 231-253 traverse the membrane as a helical segment; it reads TIRYLAASVFTCLAIALGFYRFW.

It belongs to the CCDC90 family. As to quaternary structure, interacts with MCU.

It is found in the mitochondrion membrane. The chain is Coiled-coil domain-containing protein 90B, mitochondrial (Ccdc90b) from Rattus norvegicus (Rat).